The primary structure comprises 189 residues: GTP cyclohydrolase 1 (189 aa).

Residues C80, H83, and C152 each coordinate Zn(2+).

The protein belongs to the GTP cyclohydrolase I family. In terms of assembly, toroid-shaped homodecamer, composed of two pentamers of five dimers.

The enzyme catalyses GTP + H2O = 7,8-dihydroneopterin 3'-triphosphate + formate + H(+). It participates in cofactor biosynthesis; 7,8-dihydroneopterin triphosphate biosynthesis; 7,8-dihydroneopterin triphosphate from GTP: step 1/1. This Latilactobacillus sakei subsp. sakei (strain 23K) (Lactobacillus sakei subsp. sakei) protein is GTP cyclohydrolase 1.